A 200-amino-acid chain; its full sequence is 5'(3')-deoxyribonucleotidase, cytosolic type (200 aa).

D12 functions as the Nucleophile in the catalytic mechanism. Mg(2+) is bound by residues D12 and D14. Catalysis depends on D14, which acts as the Proton donor. Substrate is bound by residues F20, F46, Y67, and T101. T102 carries the phosphothreonine modification. K136 contributes to the substrate binding site. D147 lines the Mg(2+) pocket. S184 carries the phosphoserine modification.

Belongs to the 5'(3')-deoxyribonucleotidase family. As to quaternary structure, homodimer. Mg(2+) serves as cofactor.

Its subcellular location is the cytoplasm. Functionally, dephosphorylates the 5' and 2'(3')-phosphates of deoxyribonucleotides, with a preference for dUMP and dTMP, intermediate activity towards dGMP, and low activity towards dCMP and dAMP. The chain is 5'(3')-deoxyribonucleotidase, cytosolic type (Nt5c) from Mus musculus (Mouse).